The sequence spans 466 residues: UDP-N-acetylmuramate--L-alanine ligase (466 aa).

ATP is bound at residue 117-123; that stretch reads GTHGKTT.

Belongs to the MurCDEF family.

Its subcellular location is the cytoplasm. It catalyses the reaction UDP-N-acetyl-alpha-D-muramate + L-alanine + ATP = UDP-N-acetyl-alpha-D-muramoyl-L-alanine + ADP + phosphate + H(+). Its pathway is cell wall biogenesis; peptidoglycan biosynthesis. In terms of biological role, cell wall formation. The protein is UDP-N-acetylmuramate--L-alanine ligase of Streptomyces griseus subsp. griseus (strain JCM 4626 / CBS 651.72 / NBRC 13350 / KCC S-0626 / ISP 5235).